The following is a 361-amino-acid chain: Peptide chain release factor 1 (361 aa).

An N5-methylglutamine modification is found at Gln-237. The span at 287–297 (KQQKEQSDTRK) shows a compositional bias: basic and acidic residues. Residues 287–307 (KQQKEQSDTRKNLVGSGDRSE) form a disordered region.

This sequence belongs to the prokaryotic/mitochondrial release factor family. Post-translationally, methylated by PrmC. Methylation increases the termination efficiency of RF1.

The protein resides in the cytoplasm. Functionally, peptide chain release factor 1 directs the termination of translation in response to the peptide chain termination codons UAG and UAA. The chain is Peptide chain release factor 1 from Francisella philomiragia subsp. philomiragia (strain ATCC 25017 / CCUG 19701 / FSC 153 / O#319-036).